Here is a 468-residue protein sequence, read N- to C-terminus: Pituitary adenylate cyclase-activating polypeptide type I receptor (468 aa).

The N-terminal stretch at 1–20 (MAGVVHVSLAALLLLPMAPA) is a signal peptide. Residues 21–152 (MHSDCIFKKE…TGDQDYYYLS (132 aa)) are Extracellular-facing. Cystine bridges form between cysteine 34/cysteine 63, cysteine 54/cysteine 118, and cysteine 77/cysteine 134. Residues asparagine 48, asparagine 60, and asparagine 117 are each glycosylated (N-linked (GlcNAc...) asparagine). An important for ADCYAP1/PACAP ligand binding and specificity region spans residues 125 to 139 (EPFPHYFDACGFDEY). Residues 153-177 (VKALYTVGYSTSLVTLTTAMVILCR) traverse the membrane as a helical segment. At 178-187 (FRKLHCTRNF) the chain is on the cytoplasmic side. The helical transmembrane segment at 188 to 208 (IHMNLFVSFMLRAISVFIKDW) threads the bilayer. Residues 209-223 (ILYAEQDSNHCFIST) lie on the Extracellular side of the membrane. The chain crosses the membrane as a helical span at residues 224 to 249 (VECKAVMVFFHYCVVSNYFWLFIEGL). Residues cysteine 226 and cysteine 296 are joined by a disulfide bond. At 250 to 267 (YLFTLLVETFFPERRYFY) the chain is on the cytoplasmic side. A helical transmembrane segment spans residues 268–290 (WYTIIGWGTPTVCVTVWATLRLY). Topologically, residues 291 to 302 (FDDTGCWDMNDS) are extracellular. Asparagine 300 is a glycosylation site (N-linked (GlcNAc...) asparagine). Residues 303 to 329 (TALWWVIKGPVVGSIMVNFVLFIGIIV) traverse the membrane as a helical segment. Over 330–347 (ILVQKLQSPDMGGNESSI) the chain is Cytoplasmic. The chain crosses the membrane as a helical span at residues 348–374 (YLRLARSTLLLIPLFGIHYTVFAFSPE). A glycan (N-linked (GlcNAc...) asparagine) is linked at asparagine 375. At 375-379 (NVSKR) the chain is on the extracellular side. Residues 380 to 403 (ERLVFELGLGSFQGFVVAVLYCFL) form a helical membrane-spanning segment. Over 404–468 (NGEVQAEIKR…SGLPADNLAT (65 aa)) the chain is Cytoplasmic. 2 positions are modified to phosphoserine: serine 434 and serine 447.

Belongs to the G-protein coupled receptor 2 family. In terms of assembly, interacts with maxadilan, a vasodilator peptide from Lutzomyia longipalpis saliva; the interaction results in ADCYAP1R1 activation. Most abundant in the brain, low expression in the lung, liver, thymus, spleen, pancreas and placenta.

Its subcellular location is the cell membrane. Several synthetic peptides derived from maxadilan, a vasodilator peptide from Lutzomyia longipalpis saliva, act as antagonists for ADCYAP1R1. G protein-coupled receptor activated by the neuropeptide pituitary adenylate cyclase-activating polypeptide (ADCYAP1/PACAP). Binds both PACAP27 and PACAP38 bioactive peptides. Ligand binding causes a conformation change that triggers signaling via guanine nucleotide-binding proteins (G proteins) and modulates the activity of downstream effectors. Activates cAMP-dependent pathway. May regulate the release of adrenocorticotropin, luteinizing hormone, growth hormone, prolactin, epinephrine, and catecholamine. May play a role in spermatogenesis and sperm motility. Causes smooth muscle relaxation and secretion in the gastrointestinal tract. In Homo sapiens (Human), this protein is Pituitary adenylate cyclase-activating polypeptide type I receptor.